Reading from the N-terminus, the 106-residue chain is Cytochrome c (106 aa).

Residues Cys-17, Cys-20, and His-21 each coordinate heme c. Lys-75 bears the N6,N6,N6-trimethyllysine mark. Met-83 provides a ligand contact to heme c.

The protein belongs to the cytochrome c family. In terms of processing, binds 1 heme c group covalently per subunit.

It is found in the mitochondrion intermembrane space. Electron carrier protein. The oxidized form of the cytochrome c heme group can accept an electron from the heme group of the cytochrome c1 subunit of cytochrome reductase. Cytochrome c then transfers this electron to the cytochrome oxidase complex, the final protein carrier in the mitochondrial electron-transport chain. The chain is Cytochrome c (CYC1) from Gibberella zeae (strain ATCC MYA-4620 / CBS 123657 / FGSC 9075 / NRRL 31084 / PH-1) (Wheat head blight fungus).